Consider the following 270-residue polypeptide: Proteasome inhibitor PI31 subunit (270 aa).

Position 2 is an N-acetylalanine (A2). Residues 2-150 (AGLEVLFASA…PIHEQWEKAN (149 aa)) are important for homodimerization and interaction with FBXO7. The residue at position 152 (S152) is a Phosphoserine. Omega-N-methylarginine is present on R204. The residue at position 218 (R218) is an Asymmetric dimethylarginine. A disordered region spans residues 220–270 (LIDPSSGLPNRLPPGAVPPGARFDPFGPIGTSPSGPNPDHLPPPGYDDMYL). R230 bears the Omega-N-methylarginine mark. Phosphoserine is present on S251. Residues 254–264 (GPNPDHLPPPG) show a composition bias toward pro residues.

It belongs to the proteasome inhibitor PI31 family. Monomer and homodimer. Interacts with FBXO7.

Its subcellular location is the cytoplasm. It is found in the endoplasmic reticulum. Functionally, plays an important role in control of proteasome function. Inhibits the hydrolysis of protein and peptide substrates by the 20S proteasome. Also inhibits the activation of the proteasome by the proteasome regulatory proteins PA700 and PA28. This Bos taurus (Bovine) protein is Proteasome inhibitor PI31 subunit (PSMF1).